The sequence spans 444 residues: C4-dicarboxylate transport protein 1 (444 aa).

The next 9 membrane-spanning stretches (helical) occupy residues 9–29, 42–62, 78–98, 152–172, 190–210, 221–241, 307–327, 354–374, and 380–400; these read SIFL…VGIP, FIKL…VNGI, SVIY…VVAY, ILQV…VGEQ, IMGM…AFTT, LGAL…AVLG, FSIY…TPLA, VILA…LVLV, and FMGI…TVTI.

The protein belongs to the dicarboxylate/amino acid:cation symporter (DAACS) (TC 2.A.23) family.

It is found in the cell inner membrane. Functionally, responsible for the transport of dicarboxylates such as succinate, fumarate, and malate from the periplasm across the membrane. This is C4-dicarboxylate transport protein 1 from Pseudomonas paraeruginosa (strain DSM 24068 / PA7) (Pseudomonas aeruginosa (strain PA7)).